The primary structure comprises 91 residues: Preprofallaxidin-2 (91 aa).

The signal sequence occupies residues 1–22 (MASLKKSLFLVLFLGLVSLSIC). A propeptide spanning residues 23–49 (EKEKRENEGNENEEEEENHEEGSEEKR) is cleaved from the precursor. Residues 24-49 (KEKRENEGNENEEEEENHEEGSEEKR) form a disordered region. The segment covering 31–41 (GNENEEEEENH) has biased composition (acidic residues). Leucine amide is present on Leu-65. Positions 69 to 73 (SEEKR) are excised as a propeptide. Leu-89 is subject to Leucine amide.

Belongs to the frog skin active peptide (FSAP) family. Dermaseptin subfamily. In terms of tissue distribution, expressed by the skin glands.

It localises to the secreted. In terms of biological role, fallaxidin-3.1 shows antibacterial activity against the Gram-positive bacteria E.faecalis (MIC=100 uM) and L.lactis (MIC=100 uM). No antibacterial activity against the Gram-positive bacteria B.cereus, L.innocua, M.luteus, S.epidermidis, S.uberis and S.aureus, or the Gram-negative bacteria E.cloacae and E.coli. Functionally, fallaxidin-3.2 shows antibacterial activity against the Gram-positive bacteria E.faecalis (MIC=100 uM) and L.lactis (MIC=500 uM). No antibacterial activity against the Gram-positive bacteria B.cereus, L.innocua, M.luteus, S.epidermidis, S.uberis and S.aureus, or the Gram-negative bacteria E.cloacae and E.coli. In Litoria fallax (Eastern dwarf tree frog), this protein is Preprofallaxidin-2.